A 425-amino-acid chain; its full sequence is Serine hydroxymethyltransferase (425 aa).

(6S)-5,6,7,8-tetrahydrofolate-binding positions include Leu-122 and 126–128 (GHL). Position 231 is an N6-(pyridoxal phosphate)lysine (Lys-231). 355–357 (SPF) serves as a coordination point for (6S)-5,6,7,8-tetrahydrofolate.

The protein belongs to the SHMT family. Homodimer. The cofactor is pyridoxal 5'-phosphate.

The protein localises to the cytoplasm. The enzyme catalyses (6R)-5,10-methylene-5,6,7,8-tetrahydrofolate + glycine + H2O = (6S)-5,6,7,8-tetrahydrofolate + L-serine. It participates in one-carbon metabolism; tetrahydrofolate interconversion. Its pathway is amino-acid biosynthesis; glycine biosynthesis; glycine from L-serine: step 1/1. Functionally, catalyzes the reversible interconversion of serine and glycine with tetrahydrofolate (THF) serving as the one-carbon carrier. This reaction serves as the major source of one-carbon groups required for the biosynthesis of purines, thymidylate, methionine, and other important biomolecules. Also exhibits THF-independent aldolase activity toward beta-hydroxyamino acids, producing glycine and aldehydes, via a retro-aldol mechanism. The protein is Serine hydroxymethyltransferase of Rippkaea orientalis (strain PCC 8801 / RF-1) (Cyanothece sp. (strain PCC 8801)).